A 579-amino-acid chain; its full sequence is MAKIKSQRQLVSMTKDSSPRQPASEPHSSDSDSSDEESDHLDAVSSRKKRKLSVDFSQEEGDDEDDNQDESDDDDDVDEDGGKMKQPVAKPTFAFNAPSRIKRHPAKGDSERIGKGQPVTDAEMEDAVQSVAQAAGKKRILAPTDQNTTFESLGVEPWLVQSLANLAVKRPTGIQKGCIGEILKGRDCIGGSRTGSGKTIAFAVPILQKYAQDPSAIFAVVLTATRELALQIYEQFKAVSSPHVLKAALIIGGSDMRSQAIALAQRPSIVIATPGRLADHIRSSGEDTICGLRRVKFLVLDEADRLLSSKGPGSMLPHIDECMAVLPPPEDRQTLLFTATVTPEVRALKEMPTRPGKEPVHVCEVDTQVLAIPDSLKQSYIQLTVTHREHFLHEFLLTAANTERSIIIFVNRTSTAQFLHHLLRLLDHRVTSLHSKLRQQQRIDNLGRFRASAARILVATDVASRGLDIPEVSVVVNYDLPRDPDDYIHRVGRTARAGRKGEAVNFVGQRDVELVLAIEKRVGRPMEKWEEEGVNLETRVIRDSLKLVSEKKREALLNIEENREVGGRRKRQKLKLGAE.

Positions 1 to 117 are disordered; that stretch reads MAKIKSQRQL…GDSERIGKGQ (117 aa). A compositionally biased stretch (polar residues) spans 7–21; the sequence is QRQLVSMTKDSSPRQ. Over residues 57-79 the composition is skewed to acidic residues; sequence SQEEGDDEDDNQDESDDDDDVDE. The Q motif signature appears at 148–176; that stretch reads TTFESLGVEPWLVQSLANLAVKRPTGIQK. Residues 179–359 enclose the Helicase ATP-binding domain; that stretch reads IGEILKGRDC…EMPTRPGKEP (181 aa). 192 to 199 serves as a coordination point for ATP; the sequence is SRTGSGKT. Residues 301–304 carry the DEAD box motif; sequence DEAD. Residues 391-537 enclose the Helicase C-terminal domain; it reads FLHEFLLTAA…KWEEEGVNLE (147 aa).

It belongs to the DEAD box helicase family. DDX49/DBP8 subfamily.

The protein localises to the nucleus. Its subcellular location is the nucleolus. It catalyses the reaction ATP + H2O = ADP + phosphate + H(+). In terms of biological role, ATP-binding RNA helicase involved in 40S ribosomal subunit biogenesis and is required for the normal formation of 18S rRNAs through pre-rRNA processing at A0, A1 and A2 sites. Required for vegetative growth. The polypeptide is ATP-dependent RNA helicase DBP8 (DBP8) (Pyricularia oryzae (strain 70-15 / ATCC MYA-4617 / FGSC 8958) (Rice blast fungus)).